Consider the following 230-residue polypeptide: V-type proton ATPase subunit E (230 aa).

Belongs to the V-ATPase E subunit family. As to quaternary structure, V-ATPase is a heteromultimeric enzyme composed of a peripheral catalytic V1 complex (components A to H) attached to an integral membrane V0 proton pore complex (components: a, c, c', c'', d, e, f and VOA1).

Its subcellular location is the vacuole membrane. Its function is as follows. Subunit of the V1 complex of vacuolar(H+)-ATPase (V-ATPase), a multisubunit enzyme composed of a peripheral complex (V1) that hydrolyzes ATP and a membrane integral complex (V0) that translocates protons. V-ATPase is responsible for acidifying and maintaining the pH of intracellular compartments. This Neurospora crassa (strain ATCC 24698 / 74-OR23-1A / CBS 708.71 / DSM 1257 / FGSC 987) protein is V-type proton ATPase subunit E.